Consider the following 254-residue polypeptide: MDTDKLLSKDLLSNGILLKGLKELGINEKAHNKLSKLLNIYMRELKMFNASFNLVKVKDDEELIVAHILDSLSAWRFFYNETKNTESKTSLNNAETKNTNEALLTSEPFYIADAGTGAGFPGVPLAALFISLGNLDVKLSLIERMQKRCTFLENIKAVLQLNNTEIIESEAEKAPQNKFDIVTCRAFHTLDKHILQTLLNLAKPKGKLFLYKAAKEKINEETELIKKEGLNYKTEKLDVPFLKKERHLLIIEKP.

The interval 84–109 (NTESKTSLNNAETKNTNEALLTSEPF) is insert. Residues Gly-115, Phe-120, 171-172 (AE), and Arg-185 contribute to the S-adenosyl-L-methionine site.

Belongs to the methyltransferase superfamily. RNA methyltransferase RsmG family.

Its subcellular location is the cytoplasm. Functionally, specifically methylates the N7 position of a guanine in 16S rRNA. This Treponema denticola (strain ATCC 35405 / DSM 14222 / CIP 103919 / JCM 8153 / KCTC 15104) protein is Ribosomal RNA small subunit methyltransferase G.